The sequence spans 220 residues: Probable transaldolase (220 aa).

Lysine 87 (schiff-base intermediate with substrate) is an active-site residue.

The protein belongs to the transaldolase family. Type 3B subfamily.

It localises to the cytoplasm. It carries out the reaction D-sedoheptulose 7-phosphate + D-glyceraldehyde 3-phosphate = D-erythrose 4-phosphate + beta-D-fructose 6-phosphate. Its pathway is carbohydrate degradation; pentose phosphate pathway; D-glyceraldehyde 3-phosphate and beta-D-fructose 6-phosphate from D-ribose 5-phosphate and D-xylulose 5-phosphate (non-oxidative stage): step 2/3. Its function is as follows. Transaldolase is important for the balance of metabolites in the pentose-phosphate pathway. In Porphyromonas gingivalis (strain ATCC 33277 / DSM 20709 / CIP 103683 / JCM 12257 / NCTC 11834 / 2561), this protein is Probable transaldolase.